Here is a 1077-residue protein sequence, read N- to C-terminus: FKBP12-associated protein 1 homolog (1077 aa).

The disordered stretch occupies residues methionine 1–lysine 173. Positions alanine 15–lysine 29 are enriched in basic residues. Serine 33 carries the phosphoserine modification. Over residues glutamate 52–lysine 64 the composition is skewed to basic and acidic residues. Residues proline 76–asparagine 87 show a composition bias toward polar residues. Residues serine 100–arginine 116 show a composition bias toward basic and acidic residues. Residues serine 136–serine 149 show a composition bias toward low complexity. Over residues lysine 153 to lysine 173 the composition is skewed to basic and acidic residues. The RING-type; atypical zinc-finger motif lies at cysteine 197–glutamine 247. NF-X1-type zinc fingers lie at residues cysteine 290 to alanine 308, cysteine 348 to glutamate 367, cysteine 420 to phenylalanine 441, cysteine 485 to glutamate 503, cysteine 541 to glutamine 558, cysteine 595 to glutamate 614, cysteine 708 to lysine 729, and cysteine 738 to alanine 760. Residues serine 835–glycine 897 enclose the R3H domain.

The protein belongs to the NFX1 family.

Its subcellular location is the cytoplasm. It localises to the golgi apparatus. The protein localises to the nucleus. Its function is as follows. May play a role in transcription regulation. The chain is FKBP12-associated protein 1 homolog (fap1) from Schizosaccharomyces pombe (strain 972 / ATCC 24843) (Fission yeast).